Reading from the N-terminus, the 113-residue chain is Large ribosomal subunit protein bL19 (113 aa).

This sequence belongs to the bacterial ribosomal protein bL19 family.

This protein is located at the 30S-50S ribosomal subunit interface and may play a role in the structure and function of the aminoacyl-tRNA binding site. The polypeptide is Large ribosomal subunit protein bL19 (Natranaerobius thermophilus (strain ATCC BAA-1301 / DSM 18059 / JW/NM-WN-LF)).